A 122-amino-acid chain; its full sequence is Large ribosomal subunit protein uL14c (122 aa).

Belongs to the universal ribosomal protein uL14 family. Part of the 50S ribosomal subunit.

It is found in the plastid. Its subcellular location is the chloroplast. Functionally, binds to 23S rRNA. The polypeptide is Large ribosomal subunit protein uL14c (Eucalyptus globulus subsp. globulus (Tasmanian blue gum)).